We begin with the raw amino-acid sequence, 749 residues long: MAAAAVSSLLAPSGSCYSPGCHSCWGPGPGGGRRLPSPRRRPITAAARPTWAVPRRSRLEWGRVEAQNSGARTSCRAALQWLSSTARSHVNVGYGSPLVFPGLTKPGSSRCLCVVGMVGNAGNQVGDDSDDGIKVTNEKLRAVIRKSKEVLEIHRNLLEKISASERKKITSIIEDSSIYNEQDPFGQRDSSFYHLDEVPDDDEFSYDLQMYLDRRPDQSEVVATQDYEAQLSQISEMGQSVAEGTSDDPSASAAVDLINIILVAAECAPWSKTGGLGDVAGALPKALARRGHRVMVVVPMYKNYAEPQQLGEPRRYQVAGQDMEVIYYHAYIDGVDFVFIDNPIFHHVENDIYGGDRTDILKRMVLLCKAAIEVPWYVPCGGYCYGDGNLVFLANDWHTALLPVYLKAYYHDNGFMIYARSVLVIHNIAHQGRGPLDDFSYLDLPVDYMDLFKLYDPFGGDHLNIFAAGIKAADRLLTVSHGYAWELKTAEGGWGLHGIINESDWKFQGIVNGIDTTDWNPRCDIHLKSDGYTNYSLETVQAGKQQCKAALQKELGLPVRGDVPVIAFIGRLDHQKGVDLIAEAMPWIAGQDVQLIMLGTGRQDLEDTLRRLESQHYDRVRGWVGFSIRLAHRMTAGADILLMPSRFEPCGLNQLYAMMYGTVPVVHAVGGLRDTVEHYNPYEESGLGWTFEKAEANRLIDALGHCLNTYRNYRTSWEGLQKRGMMQDLSWDNAAKLYEEVLLAAKYQW.

A chloroplast-targeting transit peptide spans 1-44 (MAAAAVSSLLAPSGSCYSPGCHSCWGPGPGGGRRLPSPRRRPIT). Lysine 272 is a binding site for ADP-alpha-D-glucose.

It belongs to the glycosyltransferase 1 family. Bacterial/plant glycogen synthase subfamily. As to expression, expressed in endosperm, leaves, and weakly in roots.

It localises to the plastid. It is found in the amyloplast. The protein resides in the chloroplast. It catalyses the reaction [(1-&gt;4)-alpha-D-glucosyl](n) + ADP-alpha-D-glucose = [(1-&gt;4)-alpha-D-glucosyl](n+1) + ADP + H(+). The protein operates within glycan biosynthesis; starch biosynthesis. In terms of biological role, may be involved in starch synthesis in endosperm amyloplasts and contribute to the deposition of transient starch in chloroplasts of leaves. The polypeptide is Soluble starch synthase 2-1, chloroplastic/amyloplastic (SSII-1) (Oryza sativa subsp. japonica (Rice)).